The following is a 90-amino-acid chain: Acyl-CoA-binding protein (90 aa).

Residues 1-16 show a composition bias toward basic and acidic residues; that stretch reads MGLKEDFEEHAEKAKT. Residues 1 to 20 form a disordered region; it reads MGLKEDFEEHAEKAKTLPEN. Residues 3–88 enclose the ACB domain; that stretch reads LKEDFEEHAE…VKQLLGEAAA (86 aa). Residues 30-34, Lys56, and Tyr75 each bind an acyl-CoA; that span reads YGLYK.

This sequence belongs to the ACBP family.

Its function is as follows. Binds medium- and long-chain acyl-CoA esters with very high affinity and may function as an intracellular carrier of acyl-CoA esters. The chain is Acyl-CoA-binding protein from Ricinus communis (Castor bean).